A 71-amino-acid polypeptide reads, in one-letter code: Large ribosomal subunit protein uL29 (71 aa).

It belongs to the universal ribosomal protein uL29 family.

This is Large ribosomal subunit protein uL29 from Roseiflexus sp. (strain RS-1).